The sequence spans 234 residues: Multicopy suppressor of SEC21 protein 28 (234 aa).

The Cytoplasmic segment spans residues 1-47; that stretch reads MQTPPESTDVKLDTLNEPSAHLIEKNVALPKDIFRSYLSYWIYEIAR. Threonine 3 carries the phosphothreonine modification. Residues 48–68 traverse the membrane as a helical segment; that stretch reads YTPVMILSLVIGVLVLLIIFF. At 69-72 the chain is on the extracellular side; that stretch reads NDNE. A helical membrane pass occupies residues 73-93; it reads ACVFNSAIFAFTSLVGLLIIL. Residues 94–234 are Cytoplasmic-facing; the sequence is SDGNPKLVSR…NIDALLKKTE (141 aa). A COPI binding region spans residues 231–234; the sequence is KKTE.

Belongs to the DUP/COS family. Interacts with MST27. Binds to coatomer proteins of COPI and SEC23/SEC24 of COPII coated vesicles.

The protein resides in the endoplasmic reticulum. It localises to the golgi apparatus. Its subcellular location is the cytoplasmic vesicle. It is found in the COPI-coated vesicle membrane. The protein localises to the COPII-coated vesicle membrane. Involved in protein trafficking vesicle formation, probably by stabilizing of coatomer at the Golgi membrane and thus allowing the efficient formation of COPI coated vesicles. The protein is Multicopy suppressor of SEC21 protein 28 (MST28) of Saccharomyces cerevisiae (strain ATCC 204508 / S288c) (Baker's yeast).